Here is a 1093-residue protein sequence, read N- to C-terminus: Carbamoyl phosphate synthase large chain (1093 aa).

A carboxyphosphate synthetic domain region spans residues 1–412; sequence MPRRNDIRKI…SLMKALRSLE (412 aa). Residues R139, R179, G185, G186, E218, V220, E225, G251, V252, H253, Q295, and E309 each coordinate ATP. The 196-residue stretch at 143–338 folds into the ATP-grasp 1 domain; sequence KDAMTRIGLD…IAKIAAKLAV (196 aa). Positions 295, 309, and 311 each coordinate Mg(2+). Residues Q295, E309, and N311 each contribute to the Mn(2+) site. The tract at residues 413 to 560 is oligomerization domain; sequence TGKRVGAEVL…YSSYEEEDEA (148 aa). Residues 561 to 952 are carbamoyl phosphate synthetic domain; it reads PQTDKRKVII…AFAKAQLSAG (392 aa). One can recognise an ATP-grasp 2 domain in the interval 689 to 880; that stretch reads GKLLEQLQIP…LAKIASRLMT (192 aa). Positions 725, 764, 766, 771, 796, 797, 798, 799, 839, and 851 each coordinate ATP. Mg(2+) is bound by residues Q839, E851, and N853. Q839, E851, and N853 together coordinate Mn(2+). One can recognise an MGS-like domain in the interval 953–1093; sequence LILPSSGTVF…QLLHAGHAVK (141 aa). The segment at 953 to 1093 is allosteric domain; that stretch reads LILPSSGTVF…QLLHAGHAVK (141 aa).

Belongs to the CarB family. Composed of two chains; the small (or glutamine) chain promotes the hydrolysis of glutamine to ammonia, which is used by the large (or ammonia) chain to synthesize carbamoyl phosphate. Tetramer of heterodimers (alpha,beta)4. Mg(2+) is required as a cofactor. The cofactor is Mn(2+).

It carries out the reaction hydrogencarbonate + L-glutamine + 2 ATP + H2O = carbamoyl phosphate + L-glutamate + 2 ADP + phosphate + 2 H(+). It catalyses the reaction hydrogencarbonate + NH4(+) + 2 ATP = carbamoyl phosphate + 2 ADP + phosphate + 2 H(+). It participates in amino-acid biosynthesis; L-arginine biosynthesis; carbamoyl phosphate from bicarbonate: step 1/1. The protein operates within pyrimidine metabolism; UMP biosynthesis via de novo pathway; (S)-dihydroorotate from bicarbonate: step 1/3. Functionally, large subunit of the glutamine-dependent carbamoyl phosphate synthetase (CPSase). CPSase catalyzes the formation of carbamoyl phosphate from the ammonia moiety of glutamine, carbonate, and phosphate donated by ATP, constituting the first step of 2 biosynthetic pathways, one leading to arginine and/or urea and the other to pyrimidine nucleotides. The large subunit (synthetase) binds the substrates ammonia (free or transferred from glutamine from the small subunit), hydrogencarbonate and ATP and carries out an ATP-coupled ligase reaction, activating hydrogencarbonate by forming carboxy phosphate which reacts with ammonia to form carbamoyl phosphate. The protein is Carbamoyl phosphate synthase large chain of Acidobacterium capsulatum (strain ATCC 51196 / DSM 11244 / BCRC 80197 / JCM 7670 / NBRC 15755 / NCIMB 13165 / 161).